The chain runs to 374 residues: Organelle RRM domain-containing protein 1, chloroplastic (374 aa).

The transit peptide at 1–54 directs the protein to the chloroplast; sequence MEALIASTSFFVPISNSSSSHIINNRFFPSFYSPNLNFGTFRKTSLSSSHLVFS. Basic and acidic residues predominate over residues 258 to 271; sequence KDYEGDSTQDSRDQ. The interval 258–279 is disordered; it reads KDYEGDSTQDSRDQDDSESPPV. The RRM domain maps to 282–360; that stretch reads KKLFITGLSF…WMIVVDVAKT (79 aa).

As to quaternary structure, interacts with PCMP-H51/CRR28 and PCMP-H12/OTP82. Interacts with MORF8/RIP1, MORF2/RIP2 and VAR3/OZ1.

It is found in the plastid. It localises to the chloroplast. Involved in C-to-U editing of chloroplastic RNA. Functions as major chloroplastic editing factor. Controls 62 percent of the chloroplastic editing sites. Binds RNA close to ORRM1-dependent editing sites in vitro. Binds the editing recognition trans-factors PCMP-H51/CRR28 and PCMP-H12/OTP82. This is Organelle RRM domain-containing protein 1, chloroplastic from Arabidopsis thaliana (Mouse-ear cress).